The chain runs to 479 residues: MQFNNTWLNELNGFHTTLRPMPLKNARLLYYSAELAQDLGLDERLFDAQNVGLWSGERLAEGMQPLAQVYSGHQFGVWAGQLGDGRGLLLGEQQLPDGRKFDWHLKGAGLTPYSRMGDGRAVLRSTLREFLAGEAMYHLGIPTSRALTVVTSDEPVYRETTEAGAMLLRVAESHVRFGHFEHYYYQGQTEKVTQLADYVIRHHWPELVQEKDRYLLWFSDVVQRTARMIAGWQSVGFAHGVMNTDNMSILGLTFDYGPYGFLDDYRPDLICNHSDHQGRYSFENQPMIGLWNLNRLAHALSGLMSPQQLKQALAGYEPELMRCWGEKMRAKLGLLTPAKDDNNILTGLLSLMTKEGSDYTRTFRQLSQSEQLQLRSPMRDEFIDRDAFDSWYNVWRQRVLQEERSDEERQQTMKLANPALVLRNYLAQQAIERAEQDDISVLARLHQALSRPFDDAPEYADLAQRPPDWGKKLEVSCSS.

Residues G83, G85, R86, K106, D118, G119, R169, and R176 each contribute to the ATP site. Catalysis depends on D245, which acts as the Proton acceptor. Positions 246 and 255 each coordinate Mg(2+). D255 provides a ligand contact to ATP.

The protein belongs to the SELO family. It depends on Mg(2+) as a cofactor. The cofactor is Mn(2+).

It catalyses the reaction L-seryl-[protein] + ATP = 3-O-(5'-adenylyl)-L-seryl-[protein] + diphosphate. The catalysed reaction is L-threonyl-[protein] + ATP = 3-O-(5'-adenylyl)-L-threonyl-[protein] + diphosphate. The enzyme catalyses L-tyrosyl-[protein] + ATP = O-(5'-adenylyl)-L-tyrosyl-[protein] + diphosphate. It carries out the reaction L-histidyl-[protein] + UTP = N(tele)-(5'-uridylyl)-L-histidyl-[protein] + diphosphate. It catalyses the reaction L-seryl-[protein] + UTP = O-(5'-uridylyl)-L-seryl-[protein] + diphosphate. The catalysed reaction is L-tyrosyl-[protein] + UTP = O-(5'-uridylyl)-L-tyrosyl-[protein] + diphosphate. Nucleotidyltransferase involved in the post-translational modification of proteins. It can catalyze the addition of adenosine monophosphate (AMP) or uridine monophosphate (UMP) to a protein, resulting in modifications known as AMPylation and UMPylation. This chain is Protein nucleotidyltransferase YdiU, found in Erwinia tasmaniensis (strain DSM 17950 / CFBP 7177 / CIP 109463 / NCPPB 4357 / Et1/99).